A 222-amino-acid chain; its full sequence is Cytidylate kinase 2 (222 aa).

7–15 (GPSGAGKGT) contributes to the ATP binding site.

The protein belongs to the cytidylate kinase family. Type 1 subfamily.

The protein resides in the cytoplasm. It carries out the reaction CMP + ATP = CDP + ADP. It catalyses the reaction dCMP + ATP = dCDP + ADP. This Haemophilus influenzae (strain ATCC 51907 / DSM 11121 / KW20 / Rd) protein is Cytidylate kinase 2.